The sequence spans 470 residues: Iron-sulfur cluster assembly SufBD family protein ABCI9 (470 aa).

Belongs to the iron-sulfur cluster assembly SufBD family.

The polypeptide is Iron-sulfur cluster assembly SufBD family protein ABCI9 (ABCI9) (Arabidopsis thaliana (Mouse-ear cress)).